The sequence spans 244 residues: Adenosine 5'-phosphosulfate reductase (244 aa).

Residues Cys-129, Cys-130, Cys-212, and Cys-215 each contribute to the [4Fe-4S] cluster site. The active-site Nucleophile; cysteine thiosulfonate intermediate is Cys-240.

It belongs to the PAPS reductase family. CysH subfamily. [4Fe-4S] cluster is required as a cofactor.

Its subcellular location is the cytoplasm. The catalysed reaction is [thioredoxin]-disulfide + sulfite + AMP + 2 H(+) = adenosine 5'-phosphosulfate + [thioredoxin]-dithiol. It functions in the pathway sulfur metabolism; hydrogen sulfide biosynthesis; sulfite from sulfate. Catalyzes the formation of sulfite from adenosine 5'-phosphosulfate (APS) using thioredoxin as an electron donor. The polypeptide is Adenosine 5'-phosphosulfate reductase (Neisseria meningitidis serogroup A / serotype 4A (strain DSM 15465 / Z2491)).